Consider the following 402-residue polypeptide: Deoxyguanosinetriphosphate triphosphohydrolase-like protein (402 aa).

The HD domain occupies 73–217 (RLTHTIEVAQ…AAIADDIAYN (145 aa)).

This sequence belongs to the dGTPase family. Type 2 subfamily.

The protein is Deoxyguanosinetriphosphate triphosphohydrolase-like protein of Brucella suis (strain ATCC 23445 / NCTC 10510).